A 212-amino-acid chain; its full sequence is External core antigen (212 aa).

The first 19 residues, 1–19, serve as a signal peptide directing secretion; it reads MQLFHLCLIISCSCPTVQA. The tract at residues 25–27 is HBEAG; that stretch reads GWL. The segment at 179–212 is disordered; that stretch reads RQRGRTIRRRTPSPRRRRSQSPRRRRSQSRESQC. Residues 180–205 show a composition bias toward basic residues; the sequence is QRGRTIRRRTPSPRRRRSQSPRRRRS. One copy of the 1; half-length repeat lies at 184–190; sequence TIRRRTP. The tract at residues 184-206 is 3 X 8 AA repeats of S-P-R-R-R-R-S-Q; it reads TIRRRTPSPRRRRSQSPRRRRSQ. The propeptide occupies 184–212; sequence TIRRRTPSPRRRRSQSPRRRRSQSRESQC. Repeat copies occupy residues 191 to 198 and 199 to 206.

Belongs to the orthohepadnavirus precore antigen family. Homodimerizes. Phosphorylated. In terms of processing, cleaved by host furin.

The protein localises to the secreted. Its subcellular location is the host nucleus. May regulate immune response to the intracellular capsid in acting as a T-cell tolerogen, by having an immunoregulatory effect which prevents destruction of infected cells by cytotoxic T-cells. This immune regulation may predispose to chronicity during perinatal infections and prevent severe liver injury during adult infections. The chain is External core antigen from Hepatitis B virus genotype D subtype ayw (isolate Australia/AustKW/1991) (HBV-D).